A 366-amino-acid polypeptide reads, in one-letter code: Phenylalanine--tRNA ligase alpha subunit (366 aa).

E259 contacts Mg(2+).

The protein belongs to the class-II aminoacyl-tRNA synthetase family. Phe-tRNA synthetase alpha subunit type 1 subfamily. In terms of assembly, tetramer of two alpha and two beta subunits. The cofactor is Mg(2+).

The protein localises to the cytoplasm. The catalysed reaction is tRNA(Phe) + L-phenylalanine + ATP = L-phenylalanyl-tRNA(Phe) + AMP + diphosphate + H(+). The chain is Phenylalanine--tRNA ligase alpha subunit from Novosphingobium aromaticivorans (strain ATCC 700278 / DSM 12444 / CCUG 56034 / CIP 105152 / NBRC 16084 / F199).